The sequence spans 476 residues: Rho GTPase-activating protein 68F (476 aa).

Disordered stretches follow at residues 1–35 (MDAH…DLHD) and 241–266 (DKLN…QQQH). 2 positions are modified to phosphoserine: Ser29 and Ser31. In terms of domain architecture, CRAL-TRIO spans 91 to 244 (SENFQTPRNK…NICDLDDKLN (154 aa)). The residue at position 251 (Thr251) is a Phosphothreonine. Polar residues predominate over residues 257–266 (NINASRQQQH). Positions 276–464 (VPLKFIVMNS…FVLQNHKDIY (189 aa)) constitute a Rho-GAP domain.

Functionally, functions as a GTPase-activating protein (GAP) for RhoA/Rho1 during gastrulation by converting it to an inactive GDP-bound state. The chain is Rho GTPase-activating protein 68F (RhoGAP68F) from Drosophila melanogaster (Fruit fly).